Here is a 203-residue protein sequence, read N- to C-terminus: LexA repressor (203 aa).

The H-T-H motif DNA-binding region spans 28-47 (IREIGDEFGITAKGAYDHLK). Catalysis depends on for autocatalytic cleavage activity residues serine 127 and lysine 164.

The protein belongs to the peptidase S24 family. As to quaternary structure, homodimer.

The enzyme catalyses Hydrolysis of Ala-|-Gly bond in repressor LexA.. Its function is as follows. Represses a number of genes involved in the response to DNA damage (SOS response), including recA and lexA. In the presence of single-stranded DNA, RecA interacts with LexA causing an autocatalytic cleavage which disrupts the DNA-binding part of LexA, leading to derepression of the SOS regulon and eventually DNA repair. This chain is LexA repressor, found in Leptospira borgpetersenii serovar Hardjo-bovis (strain JB197).